The primary structure comprises 123 residues: Ribosome-binding factor A (123 aa).

Belongs to the RbfA family. Monomer. Binds 30S ribosomal subunits, but not 50S ribosomal subunits or 70S ribosomes.

Its subcellular location is the cytoplasm. Its function is as follows. One of several proteins that assist in the late maturation steps of the functional core of the 30S ribosomal subunit. Associates with free 30S ribosomal subunits (but not with 30S subunits that are part of 70S ribosomes or polysomes). Required for efficient processing of 16S rRNA. May interact with the 5'-terminal helix region of 16S rRNA. In Legionella pneumophila (strain Lens), this protein is Ribosome-binding factor A.